A 385-amino-acid chain; its full sequence is Multidrug resistance protein MdtE (385 aa).

Residues Met1 to Ala20 form the signal peptide. A lipid anchor (N-palmitoyl cysteine) is attached at Cys21. Cys21 carries S-diacylglycerol cysteine lipidation.

Belongs to the membrane fusion protein (MFP) (TC 8.A.1) family. In terms of assembly, homotrimer. Part of the tripartite efflux system MdtEF-TolC, which is composed of an inner membrane transporter, MdtF, a membrane fusion protein, MdtE, and an outer membrane component, TolC. The complex forms a large protein conduit and can translocate molecules across both the inner and outer membranes.

The protein localises to the cell inner membrane. In terms of biological role, part of the tripartite efflux system MdtEF-TolC, which confers resistance to various compounds. This chain is Multidrug resistance protein MdtE (mdtE), found in Escherichia coli O6:H1 (strain CFT073 / ATCC 700928 / UPEC).